A 427-amino-acid chain; its full sequence is Adenylosuccinate synthetase (427 aa).

GTP-binding positions include 12-18 (GDEGKGK) and 40-42 (GHT). The Proton acceptor role is filled by aspartate 13. 2 residues coordinate Mg(2+): aspartate 13 and glycine 40. Residues 13-16 (DEGK), 38-41 (NAGH), threonine 128, arginine 142, glutamine 223, threonine 238, and arginine 302 each bind IMP. Residue histidine 41 is the Proton donor of the active site. 298–304 (VTTGRAR) is a binding site for substrate. Residues arginine 304, 330–332 (KLD), and 412–414 (GVG) contribute to the GTP site.

It belongs to the adenylosuccinate synthetase family. As to quaternary structure, homodimer. Mg(2+) serves as cofactor.

Its subcellular location is the cytoplasm. It carries out the reaction IMP + L-aspartate + GTP = N(6)-(1,2-dicarboxyethyl)-AMP + GDP + phosphate + 2 H(+). It participates in purine metabolism; AMP biosynthesis via de novo pathway; AMP from IMP: step 1/2. Its function is as follows. Plays an important role in the de novo pathway of purine nucleotide biosynthesis. Catalyzes the first committed step in the biosynthesis of AMP from IMP. The chain is Adenylosuccinate synthetase from Frankia casuarinae (strain DSM 45818 / CECT 9043 / HFP020203 / CcI3).